The following is a 414-amino-acid chain: Putative L-lactate dehydrogenase (414 aa).

The region spanning 29–406 (RRLGAALTIQ…SPRHVTQLRR (378 aa)) is the FMN hydroxy acid dehydrogenase domain. Tyr55 is an a 2-oxocarboxylate binding site. Ser137 and Gln159 together coordinate FMN. Tyr161 lines the a 2-oxocarboxylate pocket. Thr187 is a binding site for FMN. Arg196 lines the a 2-oxocarboxylate pocket. Lys277 is an FMN binding site. The active-site Proton acceptor is the His301. Residue Arg304 coordinates a 2-oxocarboxylate. FMN-binding positions include 332 to 336 (DTGIM) and 355 to 356 (GR).

The protein belongs to the FMN-dependent alpha-hydroxy acid dehydrogenase family. FMN serves as cofactor.

The enzyme catalyses (S)-lactate + A = pyruvate + AH2. The sequence is that of Putative L-lactate dehydrogenase (lldD) from Mycobacterium tuberculosis (strain ATCC 25618 / H37Rv).